We begin with the raw amino-acid sequence, 78 residues long: Pigment-dispersing hormone peptides (78 aa).

The first 22 residues, 1–22 (MRSAVIVTMLVVVALAALLTQG), serve as a signal peptide directing secretion. Ala-75 is modified (alanine amide).

The protein belongs to the arthropod PDH family. As to expression, expressed in eyestalk tissue and cerebral ganglia.

The protein localises to the secreted. The pigment-dispersing hormone causes the migration of the distal retinal pigment into the proximal end of the pigment chromatophore cells and thus decreases the amount of light entering the retinulas. May also function as a neurotransmitter and/or neuromodulator. The protein is Pigment-dispersing hormone peptides of Carcinus maenas (Common shore crab).